An 89-amino-acid chain; its full sequence is uncharacterized protein (89 aa).

A helical membrane pass occupies residues Val-67–Trp-86.

The protein localises to the membrane. This is an uncharacterized protein from Bacillus subtilis (strain 168).